The primary structure comprises 432 residues: Adenosylhomocysteinase (432 aa).

The tract at residues 1–24 is disordered; sequence MSAYSPLSAQLDADTDVDVESTRT. Substrate is bound by residues Asp-137 and Glu-162. 163–165 contacts NAD(+); it reads TTT. Positions 192 and 196 each coordinate substrate. NAD(+) contacts are provided by residues Asn-197, 226–231, Glu-249, Asn-284, 305–307, and Asn-352; these read GYGYCG and AGH.

This sequence belongs to the adenosylhomocysteinase family. The cofactor is NAD(+).

Its subcellular location is the cytoplasm. It catalyses the reaction S-adenosyl-L-homocysteine + H2O = L-homocysteine + adenosine. It functions in the pathway amino-acid biosynthesis; L-homocysteine biosynthesis; L-homocysteine from S-adenosyl-L-homocysteine: step 1/1. Functionally, may play a key role in the regulation of the intracellular concentration of adenosylhomocysteine. The polypeptide is Adenosylhomocysteinase (Haloquadratum walsbyi (strain DSM 16790 / HBSQ001)).